Reading from the N-terminus, the 301-residue chain is Transcription factor bHLH103 (301 aa).

Residues 29-106 enclose the KRAB domain; it reads PRSAEIVVDF…LEGLFDSSEQ (78 aa). 2 disordered regions span residues 161–184 and 239–272; these read EKSG…ETPS and TSPH…PRQD. Residues 180 to 229 enclose the bHLH domain; that stretch reads LETPSHFPSFKVRKEKLGDRITALQQLVSPFGKTDTASVLHDAIDYIKFL. Residues 239 to 269 are compositionally biased toward polar residues; sequence TSPHLNSIGSGEQKQWSDKSSNNTHNQNCSP.

In terms of assembly, homodimer. As to expression, mature root endodermis.

It localises to the nucleus. This Arabidopsis thaliana (Mouse-ear cress) protein is Transcription factor bHLH103 (BHLH103).